We begin with the raw amino-acid sequence, 681 residues long: Sterile alpha motif domain-containing protein 11 (681 aa).

Disordered stretches follow at residues 41–77 (RNLKKERTPSFSASDGDSDGSGPTCGRRPGLKQEDGP), 212–234 (YHLGLPSHGEDPPWHDPPHHLPS), 251–307 (GPSG…APHV), and 407–498 (LLAL…GAEG). Lys-72 participates in a covalent cross-link: Glycyl lysine isopeptide (Lys-Gly) (interchain with G-Cter in SUMO2). The segment covering 219 to 234 (HGEDPPWHDPPHHLPS) has biased composition (basic and acidic residues). Residues 412–423 (PQGPPGSGPPTP) are compositionally biased toward pro residues. Thr-485 is modified (phosphothreonine). Residues 543–608 (WTVDDVCSFV…AQVARRLGRV (66 aa)) form the SAM domain. Positions 625-681 (LRAPERELGTGEQPLSPTTATSPYGGGHALAGQTSPKQENGTLALLPGAPDPSQPLC) are disordered. Composition is skewed to polar residues over residues 637-646 (QPLSPTTATS) and 656-665 (GQTSPKQENG). At Ser-640 the chain carries Phosphoserine.

Self-associates. Component of a Polycomb group (PcG) multiprotein PRC1-like complex. Interacts with SAMD7 and PHC2. Expressed in the outer and inner nuclear layers, ganglion cell layer and rod photoreceptors of the retina (at protein level). Widely expressed, showing the highest expression in kidney, prostate and retina.

Its subcellular location is the nucleus. Component of a Polycomb group (PcG) multiprotein PRC1-like complex, essential for establishing rod photoreceptor cell identity and function by silencing nonrod gene expression in developing rod photoreceptor cells. This chain is Sterile alpha motif domain-containing protein 11 (SAMD11), found in Homo sapiens (Human).